Here is a 460-residue protein sequence, read N- to C-terminus: Light-independent protochlorophyllide reductase subunit N (460 aa).

[4Fe-4S] cluster contacts are provided by Cys-22, Cys-47, and Cys-107.

Belongs to the BchN/ChlN family. Protochlorophyllide reductase is composed of three subunits; ChlL, ChlN and ChlB. Forms a heterotetramer of two ChlB and two ChlN subunits. The cofactor is [4Fe-4S] cluster.

The enzyme catalyses chlorophyllide a + oxidized 2[4Fe-4S]-[ferredoxin] + 2 ADP + 2 phosphate = protochlorophyllide a + reduced 2[4Fe-4S]-[ferredoxin] + 2 ATP + 2 H2O. Its pathway is porphyrin-containing compound metabolism; chlorophyll biosynthesis (light-independent). Component of the dark-operative protochlorophyllide reductase (DPOR) that uses Mg-ATP and reduced ferredoxin to reduce ring D of protochlorophyllide (Pchlide) to form chlorophyllide a (Chlide). This reaction is light-independent. The NB-protein (ChlN-ChlB) is the catalytic component of the complex. The sequence is that of Light-independent protochlorophyllide reductase subunit N from Thermosynechococcus vestitus (strain NIES-2133 / IAM M-273 / BP-1).